The following is a 398-amino-acid chain: Bifunctional enzyme IspD/IspF (398 aa).

A 2-C-methyl-D-erythritol 4-phosphate cytidylyltransferase region spans residues 1 to 234 (MANSRRTAAI…SRLAALLGDI (234 aa)). Positions 235-398 (RTGTGYDVHA…LPWGPNGLSG (164 aa)) are 2-C-methyl-D-erythritol 2,4-cyclodiphosphate synthase. A divalent metal cation-binding residues include Asp-241 and His-243. 4-CDP-2-C-methyl-D-erythritol 2-phosphate contacts are provided by residues 241–243 (DVH) and 267–268 (HS). His-275 is a binding site for a divalent metal cation. 4-CDP-2-C-methyl-D-erythritol 2-phosphate-binding positions include 289-291 (DIG), 365-368 (TTSE), Phe-372, and Arg-375.

It in the N-terminal section; belongs to the IspD/TarI cytidylyltransferase family. IspD subfamily. The protein in the C-terminal section; belongs to the IspF family. Requires a divalent metal cation as cofactor.

The enzyme catalyses 2-C-methyl-D-erythritol 4-phosphate + CTP + H(+) = 4-CDP-2-C-methyl-D-erythritol + diphosphate. It catalyses the reaction 4-CDP-2-C-methyl-D-erythritol 2-phosphate = 2-C-methyl-D-erythritol 2,4-cyclic diphosphate + CMP. Its pathway is isoprenoid biosynthesis; isopentenyl diphosphate biosynthesis via DXP pathway; isopentenyl diphosphate from 1-deoxy-D-xylulose 5-phosphate: step 2/6. It participates in isoprenoid biosynthesis; isopentenyl diphosphate biosynthesis via DXP pathway; isopentenyl diphosphate from 1-deoxy-D-xylulose 5-phosphate: step 4/6. Bifunctional enzyme that catalyzes the formation of 4-diphosphocytidyl-2-C-methyl-D-erythritol from CTP and 2-C-methyl-D-erythritol 4-phosphate (MEP) (IspD), and catalyzes the conversion of 4-diphosphocytidyl-2-C-methyl-D-erythritol 2-phosphate (CDP-ME2P) to 2-C-methyl-D-erythritol 2,4-cyclodiphosphate (ME-CPP) with a corresponding release of cytidine 5-monophosphate (CMP) (IspF). The chain is Bifunctional enzyme IspD/IspF from Rhodopseudomonas palustris (strain BisA53).